A 669-amino-acid chain; its full sequence is Dymeclin (669 aa).

G2 carries the N-myristoyl glycine lipid modification.

Belongs to the dymeclin family. Post-translationally, myristoylated in vitro; myristoylation is not essential for protein targeting to Golgi compartment.

It is found in the cytoplasm. It localises to the golgi apparatus. Functionally, necessary for correct organization of Golgi apparatus. The sequence is that of Dymeclin (DYM) from Gallus gallus (Chicken).